The primary structure comprises 407 residues: Type II secretion system protein L (407 aa).

Over 1–257 (MEGSVSEFLT…WLRYWQIWRK (257 aa)) the chain is Cytoplasmic. A helical membrane pass occupies residues 258-275 (VAIAAGLFVAVSISYSLF). At 276–407 (QAHQYEAQAD…VFGVFVVKPK (132 aa)) the chain is on the periplasmic side.

This sequence belongs to the GSP L family. As to quaternary structure, type II secretion system is composed of four main components: the outer membrane complex, the inner membrane complex, the cytoplasmic secretion ATPase and the periplasm-spanning pseudopilus. Forms homodimers. Interacts with EpsM/GspM. Interacts with EpsE/GspE and EpsF/GspF.

Its subcellular location is the cell inner membrane. In terms of biological role, inner membrane component of the type II secretion system required for the energy-dependent secretion of extracellular factors such as proteases and toxins from the periplasm. Plays a role in the complex assembly and recruits EpsM resulting in a stable complex in the inner membrane. Provides thus a link between the energy-providing EpsE protein in the cytoplasm and the rest of the T2SS machinery. The chain is Type II secretion system protein L (epsL) from Vibrio cholerae serotype O1 (strain ATCC 39315 / El Tor Inaba N16961).